The primary structure comprises 657 residues: Broad substrate specificity ATP-binding cassette transporter ABCG2 (657 aa).

The tract at residues 1-24 is disordered; that stretch reads MSSSNDHVLVPMSQRNNNGLPRTN. Topologically, residues 1 to 393 are cytoplasmic; sequence MSSSNDHVLV…SFKNLLGNPQ (393 aa). Residues 13–24 are compositionally biased toward polar residues; that stretch reads SQRNNNGLPRTN. The region spanning 48 to 285 is the ABC transporter domain; sequence VKSGFLVRKT…FASAGYHCEP (238 aa). ATP contacts are provided by residues 79 to 86, 183 to 189, Glu-210, and His-242; these read GPTGGGKS and RGISGGE. One can recognise an ABC transmembrane type-2 domain in the interval 389 to 653; the sequence is LGNPQASVAQ…TIAYLKLLFL (265 aa). A helical transmembrane segment spans residues 394–414; that stretch reads ASVAQLIVTVILGLIIGAIYF. The Extracellular portion of the chain corresponds to 415-428; the sequence is DLKYDAAGMQNRAG. A helical transmembrane segment spans residues 429 to 449; that stretch reads VLFFLTTNQCFSSVSAVELFV. Residues 450 to 477 lie on the Cytoplasmic side of the membrane; that stretch reads VEKKLFIHEYISGYYRVSSYFFGKVMSD. Residues 478 to 498 form a helical membrane-spanning segment; it reads LLPMRFLPSVIFTCVLYFMLG. Residues 499–506 lie on the Extracellular side of the membrane; the sequence is LKKTVDAF. Residues 507–527 traverse the membrane as a helical segment; the sequence is FIMMFTLIMVAYTASSMALAI. Residues 528–535 are Cytoplasmic-facing; it reads ATGQSVVS. The chain crosses the membrane as a helical span at residues 536 to 556; the sequence is VATLLMTIAFVFMMLFSGLLV. Topologically, residues 557-632 are extracellular; it reads NLRTIGPWLS…LSPWGLWKNH (76 aa). Residues Cys-592 and Cys-610 are joined by a disulfide bond. 2 N-linked (GlcNAc...) asparagine glycosylation sites follow: Asn-596 and Asn-600. The chain crosses the membrane as a helical span at residues 633–653; it reads VALACMIIIFLTIAYLKLLFL. Topologically, residues 654-657 are cytoplasmic; it reads KKYS.

The protein belongs to the ABC transporter superfamily. ABCG family. Eye pigment precursor importer (TC 3.A.1.204) subfamily. In terms of assembly, homodimer; disulfide-linked. The minimal functional unit is a homodimer, but the major oligomeric form in plasma membrane is a homotetramer with possibility of higher order oligomerization up to homododecamers. N-glycosylated. Glycosylation-deficient ABCG2 is normally expressed and functional. Post-translationally, phosphorylated. Phosphorylation may regulate the localization to the plasma membrane, the homooligomerization and therefore, the activity of the transporter. Highly expressed in kidney. Lower expression in liver, colon, heart, spleen, and placenta. Expressed in mammary gland. Expressed in intestinal villi and renal proximal tubules, hepatic bile canalicular membranes, and placental labyrinth cells (at protein level).

It localises to the cell membrane. The protein resides in the apical cell membrane. Its subcellular location is the mitochondrion membrane. The enzyme catalyses ATP + H2O + xenobioticSide 1 = ADP + phosphate + xenobioticSide 2.. It carries out the reaction riboflavin(in) + ATP + H2O = riboflavin(out) + ADP + phosphate + H(+). The catalysed reaction is pheophorbide a(in) + ATP + H2O = pheophorbide a(out) + ADP + phosphate + H(+). It catalyses the reaction urate(in) + ATP + H2O = urate(out) + ADP + phosphate + H(+). The enzyme catalyses indoxyl sulfate(in) + ATP + H2O = indoxyl sulfate(out) + ADP + phosphate + H(+). It carries out the reaction sphing-4-enine 1-phosphate(in) + ATP + H2O = sphing-4-enine 1-phosphate(out) + ADP + phosphate + H(+). The catalysed reaction is estrone 3-sulfate(in) + ATP + H2O = estrone 3-sulfate(out) + ADP + phosphate + H(+). It catalyses the reaction dehydroepiandrosterone 3-sulfate(in) + ATP + H2O = dehydroepiandrosterone 3-sulfate(out) + ADP + phosphate + H(+). The enzyme catalyses 4-methylumbelliferone sulfate(in) + ATP + H2O = 4-methylumbelliferone sulfate(out) + ADP + phosphate + H(+). It carries out the reaction 5,7-dimethyl-2-methylamino-4-(3-pyridylmethyl)-1,3-benzothiazol-6-yl beta-D-glucuronate(in) + ATP + H2O = 5,7-dimethyl-2-methylamino-4-(3-pyridylmethyl)-1,3-benzothiazol-6-yl beta-D-glucuronate(out) + ADP + phosphate + H(+). The catalysed reaction is 4-methylumbelliferone beta-D-glucuronate(in) + ATP + H2O = 4-methylumbelliferone beta-D-glucuronate(out) + ADP + phosphate + H(+). It catalyses the reaction 5,7-dimethyl-2-methylamino-4-(3-pyridylmethyl)-1,3-benzothiazol-6-yl sulfate(in) + ATP + H2O = 5,7-dimethyl-2-methylamino-4-(3-pyridylmethyl)-1,3-benzothiazol-6-yl sulfate(out) + ADP + phosphate + H(+). The enzyme catalyses 17beta-estradiol 17-O-(beta-D-glucuronate)(in) + ATP + H2O = 17beta-estradiol 17-O-(beta-D-glucuronate)(out) + ADP + phosphate + H(+). It carries out the reaction methotrexate(in) + ATP + H2O = methotrexate(out) + ADP + phosphate + H(+). The catalysed reaction is itaconate(in) + ATP + H2O = itaconate(out) + ADP + phosphate + H(+). With respect to regulation, specifically inhibited by the fungal toxin fumitremorgin C and Ko143. In terms of biological role, broad substrate specificity ATP-dependent transporter of the ATP-binding cassette (ABC) family that actively extrudes a wide variety of physiological compounds, dietary toxins and xenobiotics from cells. Involved in porphyrin homeostasis, mediating the export of protoporphyrin IX (PPIX) from both mitochondria to cytosol and cytosol to extracellular space, it also functions in the cellular export of heme. Also mediates the efflux of sphingosine-1-P from cells. Acts as a urate exporter functioning in both renal and extrarenal urate excretion. In kidney, it also functions as a physiological exporter of the uremic toxin indoxyl sulfate. Also involved in the excretion of steroids like estrone 3-sulfate/E1S, 3beta-sulfooxy-androst-5-en-17-one/DHEAS, and other sulfate conjugates. Mediates the secretion of the riboflavin and biotin vitamins into milk. Extrudes pheophorbide a, a phototoxic porphyrin catabolite of chlorophyll, reducing its bioavailability. Plays an important role in the exclusion of xenobiotics from the brain. It confers to cells a resistance to multiple drugs and other xenobiotics including mitoxantrone, pheophorbide, camptothecin, methotrexate, azidothymidine, and the anthracyclines daunorubicin and doxorubicin, through the control of their efflux. In placenta, it limits the penetration of drugs from the maternal plasma into the fetus. May play a role in early stem cell self-renewal by blocking differentiation. In inflammatory macrophages, exports itaconate from the cytosol to the extracellular compartment and limits the activation of TFEB-dependent lysosome biogenesis involved in antibacterial innate immune response. This Mus musculus (Mouse) protein is Broad substrate specificity ATP-binding cassette transporter ABCG2 (Abcg2).